Here is a 284-residue protein sequence, read N- to C-terminus: NAD kinase (284 aa).

The active-site Proton acceptor is D60. NAD(+) is bound by residues 60-61 (DG), 134-135 (ND), K145, R162, D164, and Q235.

The protein belongs to the NAD kinase family. The cofactor is a divalent metal cation.

The protein localises to the cytoplasm. It carries out the reaction NAD(+) + ATP = ADP + NADP(+) + H(+). In terms of biological role, involved in the regulation of the intracellular balance of NAD and NADP, and is a key enzyme in the biosynthesis of NADP. Catalyzes specifically the phosphorylation on 2'-hydroxyl of the adenosine moiety of NAD to yield NADP. The chain is NAD kinase from Treponema denticola (strain ATCC 35405 / DSM 14222 / CIP 103919 / JCM 8153 / KCTC 15104).